The following is a 747-amino-acid chain: H(+)/Cl(-) exchange transporter 4 (747 aa).

The interval 1–50 (MDFLEEPFPDVGTYEDFHTIDWLREKSRDTDRHRKITSKSKESIWEFIKS) is required for localization in the endoplasmic reticulum. Residues 1-54 (MDFLEEPFPDVGTYEDFHTIDWLREKSRDTDRHRKITSKSKESIWEFIKSLLDA) are Cytoplasmic-facing. Helical transmembrane passes span 55–92 (WSGW…VCLS) and 138–161 (LNYL…VRVF). The Selectivity filter part_1 motif lies at 167 to 171 (GSGIP). Residue Ser168 participates in chloride binding. Positions 170–177 (IPEIKTIL) form an intramembrane region, helical. The next 2 membrane-spanning stretches (helical) occupy residues 187–205 (GKWT…VSSG) and 211–230 (EGPL…SLFS). Positions 209 to 213 (GKEGP) match the Selectivity filter part_2 motif. 2 intramembrane regions (helical) span residues 242 to 254 (VLSA…VSVA) and 258 to 266 (PIGGVLFSL). The next 5 membrane-spanning stretches (helical) occupy residues 278–296 (LWRS…RSIN), 320–345 (FPFI…AWCR), 352–372 (LGRY…IVAY), 429–449 (MWQL…TFGM), and 454–473 (GLFI…VGIG). The Selectivity filter part_3 motif lies at 454–458 (GLFIP). A chloride-binding site is contributed by Phe456. Intramembrane regions (helical) lie at residues 501 to 515 (GLYA…LGGV) and 519 to 530 (TVSLVVIMFELT). Residues 531-534 (GGLE) constitute an intramembrane region (note=Loop between two helices). Residues 535 to 553 (YIVPLMAAAVTSKWVADAF) form a helical membrane-spanning segment. At 554–747 (GKEGIYEAHI…NQDPESIMFN (194 aa)) the chain is on the cytoplasmic side. Tyr559 contributes to the chloride binding site. CBS domains are found at residues 587–653 (MRPR…QRQE) and 680–742 (LRRI…QDPE). ATP is bound by residues Ser597 and 618 to 620 (YNG). The tract at residues 654 to 683 (GIVSNSIMYFTEEPPELPANSPHPLKLRRI) is required for localization in the endoplasmic reticulum. ATP is bound at residue 725–728 (TKKD).

The protein belongs to the chloride channel (TC 2.A.49) family. ClC-4/CLCN4 subfamily. Predominantly present in excitable tissues such as nervous system and skeletal muscle. Not detected in heart.

It localises to the early endosome membrane. The protein localises to the late endosome membrane. The protein resides in the endoplasmic reticulum membrane. Its subcellular location is the lysosome membrane. It is found in the recycling endosome membrane. Functionally, strongly outwardly rectifying, electrogenic H(+)/Cl(-)exchanger which mediates the exchange of chloride ions against protons. The CLC channel family contains both chloride channels and proton-coupled anion transporters that exchange chloride or another anion for protons. The presence of conserved gating glutamate residues is typical for family members that function as antiporters. The sequence is that of H(+)/Cl(-) exchange transporter 4 (Clcn4) from Mus musculus (Mouse).